A 461-amino-acid polypeptide reads, in one-letter code: Protein IQ-DOMAIN 2 (461 aa).

Positions 1–55 (MGKKAKWFSSVKKAFSPDSKKSKQKLAEGQNGVISNPPVVDNVRQSSSSPPPALA) are disordered. An IQ domain is found at 114–142 (EEAAAILIQTIFRGYLARRALRAMRGLVR). A calmodulin-binding region spans residues 141–158 (VRLKLLMEGSVVKRQAAN). The disordered stretch occupies residues 278–461 (PLESSEKEQS…GVTVTNGAGS (184 aa)). Positions 310-345 (LTRNGSTQPNTPSSARGTPRNKNSFFSPPTPSRLNQ) are enriched in polar residues. The short motif at 425 to 432 (KKRLSYPT) is the Nuclear localization signal element.

This sequence belongs to the IQD family. As to quaternary structure, binds to multiple calmodulin (CaM) in the presence of Ca(2+) and CaM-like proteins.

It localises to the nucleus. It is found in the cytoplasm. The protein localises to the cytoskeleton. May be involved in cooperative interactions with calmodulins or calmodulin-like proteins. Recruits calmodulin proteins to microtubules, thus being a potential scaffold in cellular signaling and trafficking. May associate with nucleic acids and regulate gene expression at the transcriptional or post-transcriptional level. This is Protein IQ-DOMAIN 2 from Arabidopsis thaliana (Mouse-ear cress).